The sequence spans 381 residues: Deoxyguanosinetriphosphate triphosphohydrolase-like protein (381 aa).

Residues 76-203 (RMTHTLEVAG…ADLSDEIAYT (128 aa)) form the HD domain.

Belongs to the dGTPase family. Type 2 subfamily.

The chain is Deoxyguanosinetriphosphate triphosphohydrolase-like protein from Leptospira borgpetersenii serovar Hardjo-bovis (strain JB197).